Consider the following 357-residue polypeptide: U3 small nucleolar ribonucleoprotein protein LCP5 (357 aa).

N-acetylserine is present on serine 2. Disordered regions lie at residues 146 to 211 and 301 to 357; these read STLV…YKPP and NKAE…QRRL. Acidic residues predominate over residues 155–166; it reads DDSEDDESSEDE. Polar residues predominate over residues 171 to 183; sequence PNTSGIINTNKKS. Basic and acidic residues-rich tracts occupy residues 187-196 and 348-357; these read RVEETAKQEN and SAWDRAQRRL.

The protein localises to the nucleus. Its subcellular location is the nucleolus. Its function is as follows. Component of the U3 small nucleolar ribonucleoprotein. Required for the early cleavages at sites A0, A1 and A2 of the pre-ribosomal RNA. Participates in ribosome biogenesis. In Saccharomyces cerevisiae (strain ATCC 204508 / S288c) (Baker's yeast), this protein is U3 small nucleolar ribonucleoprotein protein LCP5 (LCP5).